The following is an 870-amino-acid chain: UvrABC system protein B (870 aa).

The Helicase ATP-binding domain maps to 20–410 (EGVDNNDRTQ…VFAEQVIRPT (391 aa)). 33 to 40 (GVTGSGKT) provides a ligand contact to ATP. Residues 86–109 (YYDYYQPEAYVPRTDTFIEKESSI) carry the Beta-hairpin motif. The Helicase C-terminal domain maps to 425–591 (QVDDVVGEIR…SVKSRISDIL (167 aa)). Residues 620–655 (KAHLDAMEKQMRDAAANLDFEKAARIRDEIKRLREM) form the UVR domain. Disordered regions lie at residues 671–698 (ESPVSGREKGKHNKGVAKHRTAEEQERF) and 741–870 (AKPS…RPGK). The segment covering 679–689 (KGKHNKGVAKH) has biased composition (basic residues). 2 stretches are compositionally biased toward basic and acidic residues: residues 793-808 (NSLDEMTVRRTEKPVE) and 827-836 (TDVKDRDDSA). Residues 858 to 870 (EKRRPGKTGRPGK) show a composition bias toward basic residues.

The protein belongs to the UvrB family. As to quaternary structure, forms a heterotetramer with UvrA during the search for lesions. Interacts with UvrC in an incision complex.

The protein localises to the cytoplasm. The UvrABC repair system catalyzes the recognition and processing of DNA lesions. A damage recognition complex composed of 2 UvrA and 2 UvrB subunits scans DNA for abnormalities. Upon binding of the UvrA(2)B(2) complex to a putative damaged site, the DNA wraps around one UvrB monomer. DNA wrap is dependent on ATP binding by UvrB and probably causes local melting of the DNA helix, facilitating insertion of UvrB beta-hairpin between the DNA strands. Then UvrB probes one DNA strand for the presence of a lesion. If a lesion is found the UvrA subunits dissociate and the UvrB-DNA preincision complex is formed. This complex is subsequently bound by UvrC and the second UvrB is released. If no lesion is found, the DNA wraps around the other UvrB subunit that will check the other stand for damage. The sequence is that of UvrABC system protein B from Mesorhizobium japonicum (strain LMG 29417 / CECT 9101 / MAFF 303099) (Mesorhizobium loti (strain MAFF 303099)).